The chain runs to 190 residues: Large ribosomal subunit protein bL17 (190 aa).

The segment at 128–190 (KKTAGRKAAQ…VEENNEQNKA (63 aa)) is disordered. Residues 143–154 (ALAPAEETPAPT) are compositionally biased toward low complexity. A compositionally biased stretch (acidic residues) spans 179 to 190 (LAVEENNEQNKA).

It belongs to the bacterial ribosomal protein bL17 family. As to quaternary structure, part of the 50S ribosomal subunit. Contacts protein L32.

This is Large ribosomal subunit protein bL17 from Salinispora tropica (strain ATCC BAA-916 / DSM 44818 / JCM 13857 / NBRC 105044 / CNB-440).